The following is a 191-amino-acid chain: dTTP/UTP pyrophosphatase (191 aa).

Catalysis depends on D68, which acts as the Proton acceptor.

It belongs to the Maf family. YhdE subfamily. Requires a divalent metal cation as cofactor.

Its subcellular location is the cytoplasm. It catalyses the reaction dTTP + H2O = dTMP + diphosphate + H(+). The catalysed reaction is UTP + H2O = UMP + diphosphate + H(+). In terms of biological role, nucleoside triphosphate pyrophosphatase that hydrolyzes dTTP and UTP. May have a dual role in cell division arrest and in preventing the incorporation of modified nucleotides into cellular nucleic acids. The polypeptide is dTTP/UTP pyrophosphatase (Thermoanaerobacter pseudethanolicus (strain ATCC 33223 / 39E) (Clostridium thermohydrosulfuricum)).